A 471-amino-acid chain; its full sequence is MTGDGQGPGDGQGPGNLTTSISWAGLPVLVVGIGVSGLAAARALLARGARVRVVDAGDSPRHQGAAATLRALGAEVNLGGLPAGPGDSALVVTSPGVPPTAPLITGAAGAGIPVWGEVELAWRWRGGSRWLAVTGTNGKTTTTEMLGAMLAAGGRRSTTAGNIGTPIVDAVAAEPPYETLAVELSSFQLHYTHTMAPLAAAVLNVAPDHLDWHGGAAAYAAAKAGIWRRPGTTAIGNADDATSADLLAAAPGRRVLFGLDPAARPRPGLTVVDGHLVDDAFGGGRLVAVRDLVLTSPHMISNALAAAALARAEGVGPAAIGAALVAFRPGAHRNAEVAVIDGVRWVDDSKATNPHAAAASLAGYPSVVWIAGGLNKGLAFDDLVRDARRVLRAAVLIGRCADEIAAALARHAPDVPVERADGMDDAVKAAAAFATTGDTVLLAPAAASMDMFRDYAARGDLFAAAVRAREG.

135-141 (GTNGKTT) lines the ATP pocket.

The protein belongs to the MurCDEF family.

Its subcellular location is the cytoplasm. It catalyses the reaction UDP-N-acetyl-alpha-D-muramoyl-L-alanine + D-glutamate + ATP = UDP-N-acetyl-alpha-D-muramoyl-L-alanyl-D-glutamate + ADP + phosphate + H(+). The protein operates within cell wall biogenesis; peptidoglycan biosynthesis. Cell wall formation. Catalyzes the addition of glutamate to the nucleotide precursor UDP-N-acetylmuramoyl-L-alanine (UMA). This Frankia casuarinae (strain DSM 45818 / CECT 9043 / HFP020203 / CcI3) protein is UDP-N-acetylmuramoylalanine--D-glutamate ligase.